Consider the following 397-residue polypeptide: Tryptophan synthase beta chain (397 aa).

Position 88 is an N6-(pyridoxal phosphate)lysine (Lys88).

It belongs to the TrpB family. Tetramer of two alpha and two beta chains. Pyridoxal 5'-phosphate is required as a cofactor.

It catalyses the reaction (1S,2R)-1-C-(indol-3-yl)glycerol 3-phosphate + L-serine = D-glyceraldehyde 3-phosphate + L-tryptophan + H2O. It participates in amino-acid biosynthesis; L-tryptophan biosynthesis; L-tryptophan from chorismate: step 5/5. Functionally, the beta subunit is responsible for the synthesis of L-tryptophan from indole and L-serine. The chain is Tryptophan synthase beta chain from Haemophilus influenzae (strain PittEE).